The sequence spans 249 residues: Flavodoxin/ferredoxin--NADP reductase (249 aa).

Residues 2–102 form the FAD-binding FR-type domain; it reads NTWITAKIIK…KKSYGFFTLN (101 aa). Residues 51 to 54, tyrosine 67, 75 to 77, and threonine 117 each bind FAD; these read RAYS and QLT. Residues 144 to 145, 174 to 175, arginine 185, and 215 to 217 contribute to the NADP(+) site; these read VR, SR, and NPD. 248–249 is a binding site for FAD; it reads YW.

The protein belongs to the ferredoxin--NADP reductase type 1 family. FAD serves as cofactor.

The protein localises to the cytoplasm. It carries out the reaction 2 reduced [2Fe-2S]-[ferredoxin] + NADP(+) + H(+) = 2 oxidized [2Fe-2S]-[ferredoxin] + NADPH. The enzyme catalyses reduced [flavodoxin] + NADP(+) = oxidized [flavodoxin] + NADPH + 2 H(+). Functionally, transports electrons between flavodoxin or ferredoxin and NADPH. The protein is Flavodoxin/ferredoxin--NADP reductase (fpr) of Buchnera aphidicola subsp. Baizongia pistaciae (strain Bp).